The primary structure comprises 420 residues: Vasopressin V1a receptor (420 aa).

The disordered stretch occupies residues 1–20 (MSFPRGSYDPAASNSSPWWP). The Extracellular portion of the chain corresponds to 1–54 (MSFPRGSYDPAASNSSPWWPLSAEDANSSWEAAGHQKGSDPSGDVRNEELAKLE). The N-linked (GlcNAc...) asparagine glycan is linked to Asn-27. The helical transmembrane segment at 55–75 (IAVLAVIFVVAVLGNSSVLLA) threads the bilayer. Over 76-92 (LHRTPRKTSRMHLFIRH) the chain is Cytoplasmic. Residues 93-113 (LSLADLAVAFFQVLPQLCWDI) form a helical membrane-spanning segment. Topologically, residues 114 to 125 (TYRFRGPDWLCR) are extracellular. An intrachain disulfide couples Cys-124 to Cys-205. A helical transmembrane segment spans residues 126–146 (VVKHLQVFAMFASAYMLVVMT). The Cytoplasmic portion of the chain corresponds to 147-168 (ADRYIAVCHPLKTLQQPTRRSR). Residues 169 to 189 (LMIAASWVLSFLLSTPQYFIF) traverse the membrane as a helical segment. At 190-225 (SMIEIEVNNGTKTQDCWATFIQPWGTRAYVTWMTSG) the chain is on the extracellular side. An N-linked (GlcNAc...) asparagine glycan is attached at Asn-198. Residues 226–246 (VFVVPVVILGTCYGFICYHIW) form a helical membrane-spanning segment. Over 247–294 (RNVRGKTASRQSKGSGEDVAPFHKGLLVTPCVSSVKTISRAKIRTVKM) the chain is Cytoplasmic. Residues 295–315 (TFVIVTAYILCWAPFFIVQMW) form a helical membrane-spanning segment. The Extracellular portion of the chain corresponds to 316–331 (SVWDDNFIWTDSENPS). A helical transmembrane segment spans residues 332-352 (ITITALLASLNSCCNPWIYMF). Over 353 to 420 (FSGHLLQDCV…RSIRFIPVST (68 aa)) the chain is Cytoplasmic. Residues Cys-367 and Cys-368 are each lipidated (S-palmitoyl cysteine). The disordered stretch occupies residues 379-411 (DSDNMSRRHTSYSNNRSPTNSTGTWKDSPKSSR). Residues 389 to 403 (SYSNNRSPTNSTGTW) show a composition bias toward polar residues. Ser-406 carries the phosphoserine modification.

The protein belongs to the G-protein coupled receptor 1 family. Vasopressin/oxytocin receptor subfamily.

The protein resides in the cell membrane. Its function is as follows. Receptor for arginine vasopressin. The activity of this receptor is mediated by G proteins which activate a phosphatidyl-inositol-calcium second messenger system. Involved in social memory formation. This chain is Vasopressin V1a receptor (Avpr1a), found in Microtus ochrogaster (Prairie vole).